Here is a 318-residue protein sequence, read N- to C-terminus: Methionyl-tRNA formyltransferase (318 aa).

112-115 (SILP) is a (6S)-5,6,7,8-tetrahydrofolate binding site.

The protein belongs to the Fmt family.

The enzyme catalyses L-methionyl-tRNA(fMet) + (6R)-10-formyltetrahydrofolate = N-formyl-L-methionyl-tRNA(fMet) + (6S)-5,6,7,8-tetrahydrofolate + H(+). Functionally, attaches a formyl group to the free amino group of methionyl-tRNA(fMet). The formyl group appears to play a dual role in the initiator identity of N-formylmethionyl-tRNA by promoting its recognition by IF2 and preventing the misappropriation of this tRNA by the elongation apparatus. The sequence is that of Methionyl-tRNA formyltransferase from Shewanella sp. (strain MR-4).